The primary structure comprises 539 residues: Chaperonin GroEL (539 aa).

Residues T29–P32, D86–T90, G413, and D492 contribute to the ATP site.

The protein belongs to the chaperonin (HSP60) family. In terms of assembly, forms a cylinder of 14 subunits composed of two heptameric rings stacked back-to-back. Interacts with the co-chaperonin GroES.

The protein localises to the cytoplasm. The catalysed reaction is ATP + H2O + a folded polypeptide = ADP + phosphate + an unfolded polypeptide.. In terms of biological role, together with its co-chaperonin GroES, plays an essential role in assisting protein folding. The GroEL-GroES system forms a nano-cage that allows encapsulation of the non-native substrate proteins and provides a physical environment optimized to promote and accelerate protein folding. This Fusobacterium nucleatum subsp. polymorphum (Fusobacterium polymorphum) protein is Chaperonin GroEL.